The primary structure comprises 250 residues: 23S rRNA (guanosine-2'-O-)-methyltransferase RlmB (250 aa).

3 residues coordinate S-adenosyl-L-methionine: glycine 198, leucine 218, and leucine 227.

Belongs to the class IV-like SAM-binding methyltransferase superfamily. RNA methyltransferase TrmH family. RlmB subfamily.

The protein localises to the cytoplasm. The enzyme catalyses guanosine(2251) in 23S rRNA + S-adenosyl-L-methionine = 2'-O-methylguanosine(2251) in 23S rRNA + S-adenosyl-L-homocysteine + H(+). Its function is as follows. Specifically methylates the ribose of guanosine 2251 in 23S rRNA. The protein is 23S rRNA (guanosine-2'-O-)-methyltransferase RlmB of Pseudomonas syringae pv. tomato (strain ATCC BAA-871 / DC3000).